Reading from the N-terminus, the 482-residue chain is Interferon-induced protein with tetratricopeptide repeats 5 (482 aa).

TPR repeat units follow at residues Leu51–Glu84, Leu94–Leu127, Pro138–Asn173, Ala181–Asn214, Pro249–Ser282, Ala338–Thr371, His376–Ser410, and Val435–Asn468. An interaction with the 5'-triphosphate group of PPP-RNA region spans residues Tyr254–Arg260.

It belongs to the IFIT family. Monomer. Interacts with MAP3K7 and the components of the IKK core complex CHUK, IKBKB and IKBKG; the interaction synergizes the recruitment of IKK to MAP3K7 and enhances IKK phosphorylation.

The protein resides in the cell projection. Its subcellular location is the ruffle membrane. Interferon-induced RNA-binding protein involved in the human innate immune response. Has a broad and adaptable RNA structure recognition important for RNA recognition specificity in antiviral defense. Binds precursor and processed tRNAs as well as poly-U-tailed tRNA fragments. Specifically binds single-stranded RNA bearing a 5'-triphosphate group (PPP-RNA), thereby acting as a sensor of viral single-stranded RNAs. Single-stranded PPP-RNAs, which lack 2'-O-methylation of the 5' cap and bear a 5'-triphosphate group instead, are specific from viruses, providing a molecular signature to distinguish between self and non-self mRNAs by the host during viral infection. Directly binds PPP-RNA in a non-sequence-specific manner. Also recognizes and selectively binds AT-rich dsDNA. Additionally, as a mediator in innate immunity, positively regulates IKK-NFKB signaling by sinergizing the recruitment of IKK to MAP3K7. This chain is Interferon-induced protein with tetratricopeptide repeats 5 (IFIT5), found in Homo sapiens (Human).